The primary structure comprises 560 residues: MQAPNIYPFSQTQPQALPGFTYGPPQLVFDHSAPRVDPLHSTVTINSPLPLQHYNGPNAHINSANNNYAYYYHHPNNNDNNNHSNNTIKNNNINSVLPAVNIQISNNSHYRNTHQIPSAPQRLVSIIPDPHMPPNISHFQLNNIHPQMHAPVATDIHFQQVPVYNKTNNGIGTDNINNDKPVNSNQNEVLDNIDERSCHEINRVVSFSKHFENNELTTTANDLNIQSTMDELAKLKSLSNSTHFRQSIATQNFHSLQNHITTIENRLASLLTDRQQEQQQLKQQESEKESSSPFSNKIKLPSLQELTDSISTQHLPTFYDNKRHASDTDLKSSTLHGPLYHRHAFLSTSSSSPSPTAGSAPLQKLQVPRQDDPNDKKMNISSSPFNSITYIPNTTLSPMVQTQLKNLTTSNLNTKKKNNRGRPRAIQRQPTLTTSSHFINNSNPGAAAVSTTTPAANSDEKNPNAKKIIEFCFHCGETETPEWRKGPYGTRTLCNACGLFYRKVTKKFGSKSSNLLLRYRRSIDLANDRRIPDFITIPNRFIHDMDNDQTLDSEYNTILQ.

Disordered regions lie at residues 274 to 297 (RQQE…FSNK), 345 to 383 (FLST…ISSS), and 412 to 461 (LNTK…SDEK). Positions 347 to 361 (STSSSSPSPTAGSAP) are enriched in low complexity. Positions 369-378 (RQDDPNDKKM) are enriched in basic and acidic residues. Over residues 414 to 425 (TKKKNNRGRPRA) the composition is skewed to basic residues. Residues 428 to 456 (RQPTLTTSSHFINNSNPGAAAVSTTTPAA) show a composition bias toward polar residues. The segment at 472-497 (CFHCGETETPEWRKGPYGTRTLCNAC) adopts a GATA-type zinc-finger fold.

In Saccharomyces cerevisiae (strain ATCC 204508 / S288c) (Baker's yeast), this protein is Protein GAT2 (GAT2).